Reading from the N-terminus, the 276-residue chain is MGNKLFVLDLGEIRVDENFIIANSTFVTPQKPTVSSRLIDIPVSAYLIQCTNATILYDTGCHPECMGTNGRWPAQSQLNAPYIGASECNLPERLRQLDLSPDDISTVVLSHLHNDHAGCVEFFGKSRLIAHEDEFATAVRYFATGDHSSPYIVKDIEAWLATPRNWDLVGRDERERELAPGVNLLNFGTGHASGMLGLAVRLEKQPGFLLVSDACYTATNYGPPARRAGVLHDTIGYDRTVSHIRQYAESRSLTVLFGHDREQFASLIKSTDGFYE.

The Zn(2+) site is built by His-111, His-113, His-116, His-191, Asp-213, and His-259.

This sequence belongs to the metallo-beta-lactamase superfamily. Zn(2+) is required as a cofactor.

It carries out the reaction an N-acyl-L-homoserine lactone + H2O = an N-acyl-L-homoserine + H(+). The chain is N-acyl homoserine lactonase AiiB from Rhizobium rhizogenes (strain K84 / ATCC BAA-868) (Agrobacterium radiobacter).